The chain runs to 117 residues: Large ribosomal subunit protein bL20 (117 aa).

This sequence belongs to the bacterial ribosomal protein bL20 family.

In terms of biological role, binds directly to 23S ribosomal RNA and is necessary for the in vitro assembly process of the 50S ribosomal subunit. It is not involved in the protein synthesizing functions of that subunit. This chain is Large ribosomal subunit protein bL20, found in Photobacterium profundum (strain SS9).